Here is a 361-residue protein sequence, read N- to C-terminus: Phosphoserine aminotransferase (361 aa).

Arginine 42 contacts L-glutamate. Pyridoxal 5'-phosphate contacts are provided by residues 76 to 77 (AR), tryptophan 102, threonine 153, aspartate 173, and glutamine 196. Lysine 197 is modified (N6-(pyridoxal phosphate)lysine). 238 to 239 (NT) is a binding site for pyridoxal 5'-phosphate.

Belongs to the class-V pyridoxal-phosphate-dependent aminotransferase family. SerC subfamily. In terms of assembly, homodimer. The cofactor is pyridoxal 5'-phosphate.

It is found in the cytoplasm. The enzyme catalyses O-phospho-L-serine + 2-oxoglutarate = 3-phosphooxypyruvate + L-glutamate. The catalysed reaction is 4-(phosphooxy)-L-threonine + 2-oxoglutarate = (R)-3-hydroxy-2-oxo-4-phosphooxybutanoate + L-glutamate. Its pathway is amino-acid biosynthesis; L-serine biosynthesis; L-serine from 3-phospho-D-glycerate: step 2/3. It functions in the pathway cofactor biosynthesis; pyridoxine 5'-phosphate biosynthesis; pyridoxine 5'-phosphate from D-erythrose 4-phosphate: step 3/5. In terms of biological role, catalyzes the reversible conversion of 3-phosphohydroxypyruvate to phosphoserine and of 3-hydroxy-2-oxo-4-phosphonooxybutanoate to phosphohydroxythreonine. The protein is Phosphoserine aminotransferase of Buchnera aphidicola subsp. Acyrthosiphon pisum (strain Tuc7).